Here is a 319-residue protein sequence, read N- to C-terminus: MSVRLGIVMDPIERISYKKDSSLAMLLAAQDRGWTLFYMEQKDLYQNAGQARARMKPLKVFADPAKWFEFEAEIDAGLDDLDVILMRKDPPFDMEFIYTTYLLEQAESAGVLVVNKPQSLRDCNEKLFATLFPQCTPPTLVSRRADILREFAEQQGDVILKPLDGMGGASIFRHRAGDPNLSVILETLTAHGTQQIMAQGYLPAIKDGDKRILMVDGEPVPYCLARIPAAGETRGNLAAGGRGEARPLSDKDRWIAEQIGPTLREKGLLFVGLDVIGEHLTEINVTSPTCIREIDNAFGTNIGGLLMDAIEKKLQARKG.

One can recognise an ATP-grasp domain in the interval 125–311 (EKLFATLFPQ…IGGLLMDAIE (187 aa)). 151–208 (FAEQQGDVILKPLDGMGGASIFRHRAGDPNLSVILETLTAHGTQQIMAQGYLPAIKDG) serves as a coordination point for ATP. Residues Glu282 and Asn284 each contribute to the Mg(2+) site.

The protein belongs to the prokaryotic GSH synthase family. Mg(2+) serves as cofactor. It depends on Mn(2+) as a cofactor.

It catalyses the reaction gamma-L-glutamyl-L-cysteine + glycine + ATP = glutathione + ADP + phosphate + H(+). The protein operates within sulfur metabolism; glutathione biosynthesis; glutathione from L-cysteine and L-glutamate: step 2/2. This Pseudomonas syringae pv. tomato (strain ATCC BAA-871 / DC3000) protein is Glutathione synthetase.